The following is a 460-amino-acid chain: Elongation factor 1-alpha (460 aa).

N,N,N-trimethylglycine is present on glycine 2. Lysine 3 carries the post-translational modification N6,N6-dimethyllysine; alternate. Lysine 3 carries the N6-methyllysine; alternate modification. Positions 6 to 241 (KTHINVVVIG…DSIEPPKRPT (236 aa)) constitute a tr-type G domain. Residues 15-22 (GHVDSGKS) are G1. A GTP-binding site is contributed by 15–22 (GHVDSGKS). Lysine 31 is modified (N6-methyllysine). Residues 71 to 75 (GITID) are G2. Lysine 80 is modified (N6,N6,N6-trimethyllysine). A G3 region spans residues 92–95 (DAPG). Residues 92-96 (DAPGH) and 154-157 (NKMD) contribute to the GTP site. Positions 154–157 (NKMD) are G4. The tract at residues 193 to 195 (SGF) is G5. Lysine 317 is modified (N6,N6-dimethyllysine; alternate). At lysine 317 the chain carries N6-methyllysine; alternate. N6-methyllysine is present on lysine 391.

This sequence belongs to the TRAFAC class translation factor GTPase superfamily. Classic translation factor GTPase family. EF-Tu/EF-1A subfamily.

It localises to the cytoplasm. This protein promotes the GTP-dependent binding of aminoacyl-tRNA to the A-site of ribosomes during protein biosynthesis. In Podospora anserina (Pleurage anserina), this protein is Elongation factor 1-alpha (TEF).